The following is a 243-amino-acid chain: 2-C-methyl-D-erythritol 4-phosphate cytidylyltransferase (243 aa).

It belongs to the IspD/TarI cytidylyltransferase family. IspD subfamily.

The catalysed reaction is 2-C-methyl-D-erythritol 4-phosphate + CTP + H(+) = 4-CDP-2-C-methyl-D-erythritol + diphosphate. It functions in the pathway isoprenoid biosynthesis; isopentenyl diphosphate biosynthesis via DXP pathway; isopentenyl diphosphate from 1-deoxy-D-xylulose 5-phosphate: step 2/6. Catalyzes the formation of 4-diphosphocytidyl-2-C-methyl-D-erythritol from CTP and 2-C-methyl-D-erythritol 4-phosphate (MEP). The chain is 2-C-methyl-D-erythritol 4-phosphate cytidylyltransferase from Chlorobium phaeovibrioides (strain DSM 265 / 1930) (Prosthecochloris vibrioformis (strain DSM 265)).